Consider the following 117-residue polypeptide: Hainantoxin-XV-2 (117 aa).

The first 20 residues, 1 to 20 (MKLCAVIIASLLVCVAVASS), serve as a signal peptide directing secretion. A disordered region spans residues 20–55 (SSDNQKEFAQEKEMTREETQSLGEHEKDDEVTGSEE). A propeptide spanning residues 21-56 (SDNQKEFAQEKEMTREETQSLGEHEKDDEVTGSEER) is cleaved from the precursor. Positions 23-55 (NQKEFAQEKEMTREETQSLGEHEKDDEVTGSEE) are enriched in basic and acidic residues. 4 disulfide bridges follow: Cys58-Cys72, Cys65-Cys78, Cys69-Cys115, and Cys71-Cys91.

It belongs to the neurotoxin 03 (Tx2) family. 02 subfamily. HNTX-XV sub-subfamily. As to expression, expressed by the venom gland.

The protein resides in the secreted. Its function is as follows. Putative ion channel inhibitor. This chain is Hainantoxin-XV-2, found in Cyriopagopus hainanus (Chinese bird spider).